The chain runs to 584 residues: 2-succinyl-5-enolpyruvyl-6-hydroxy-3-cyclohexene-1-carboxylate synthase (584 aa).

This sequence belongs to the TPP enzyme family. MenD subfamily. In terms of assembly, homodimer. Requires Mg(2+) as cofactor. Mn(2+) is required as a cofactor. It depends on thiamine diphosphate as a cofactor.

It carries out the reaction isochorismate + 2-oxoglutarate + H(+) = 5-enolpyruvoyl-6-hydroxy-2-succinyl-cyclohex-3-ene-1-carboxylate + CO2. The protein operates within quinol/quinone metabolism; 1,4-dihydroxy-2-naphthoate biosynthesis; 1,4-dihydroxy-2-naphthoate from chorismate: step 2/7. It functions in the pathway quinol/quinone metabolism; menaquinone biosynthesis. Catalyzes the thiamine diphosphate-dependent decarboxylation of 2-oxoglutarate and the subsequent addition of the resulting succinic semialdehyde-thiamine pyrophosphate anion to isochorismate to yield 2-succinyl-5-enolpyruvyl-6-hydroxy-3-cyclohexene-1-carboxylate (SEPHCHC). The protein is 2-succinyl-5-enolpyruvyl-6-hydroxy-3-cyclohexene-1-carboxylate synthase of Bacillus cereus (strain ATCC 10987 / NRS 248).